The sequence spans 697 residues: ATP-dependent zinc metalloprotease FtsH (697 aa).

The tract at residues 1–23 (MSQNERDSLELERKNTPPDGPRL) is disordered. Over 1–29 (MSQNERDSLELERKNTPPDGPRLPERRPR) the chain is Cytoplasmic. The chain crosses the membrane as a helical span at residues 30–50 (FSVWIYLAIFLALLVHFFLFW). Topologically, residues 51–158 (TGTDTSTIEY…QFTARIEENW (108 aa)) are periplasmic. A helical transmembrane segment spans residues 159–179 (FGGLLTWIFPLILIVALWVFL). Topologically, residues 180–697 (LRRMSPSSQV…TERPESSSAP (518 aa)) are cytoplasmic. 251–258 (GPPGTGKT) is an ATP binding site. Residue H474 participates in Zn(2+) binding. E475 is an active-site residue. Positions 478 and 550 each coordinate Zn(2+). The tract at residues 649-697 (GPRPYGDYPSPNGKDVEELKDLQKGEPTSSSAVEAPAPQTERPESSSAP) is disordered. The segment covering 662 to 672 (KDVEELKDLQK) has biased composition (basic and acidic residues).

The protein in the central section; belongs to the AAA ATPase family. This sequence in the C-terminal section; belongs to the peptidase M41 family. Homohexamer. It depends on Zn(2+) as a cofactor.

The protein localises to the cell inner membrane. Functionally, acts as a processive, ATP-dependent zinc metallopeptidase for both cytoplasmic and membrane proteins. Plays a role in the quality control of integral membrane proteins. This Rhodothermus marinus (strain ATCC 43812 / DSM 4252 / R-10) (Rhodothermus obamensis) protein is ATP-dependent zinc metalloprotease FtsH.